The following is a 615-amino-acid chain: DNA mismatch repair protein MutL (615 aa).

The interval 363–397 (FAEPAVREPVAPRYTPAPASGSRPAAPWPNAQPGY) is disordered. Residues 378–391 (PAPASGSRPAAPWP) are compositionally biased toward low complexity.

This sequence belongs to the DNA mismatch repair MutL/HexB family.

This protein is involved in the repair of mismatches in DNA. It is required for dam-dependent methyl-directed DNA mismatch repair. May act as a 'molecular matchmaker', a protein that promotes the formation of a stable complex between two or more DNA-binding proteins in an ATP-dependent manner without itself being part of a final effector complex. This is DNA mismatch repair protein MutL from Escherichia coli O157:H7.